The primary structure comprises 521 residues: MKIDMMTMILAVIAAAIGFLIGNLLRKKSSDAIVASAEELAAKMVEESKRQAETITKEASLQAKDVVYQAKADFERETKDKRRDLQALEKRLQQKEENLDKKMNLFDQRDAEFLKREQGLAAKEQVLGQKDEKLNQLISEERTRLENISGMTAAEAKKILMETMENEAKLDAAKRIKAIEEEARETADKKSKEIMALAIQRYAGEYVAERTVSVVALPSDEMKGRIIGREGRNIRALEAATGIDLIIDDTPEAVILSGFNPVRREVAKLSLEKLIADGRIHPGRIEEVVAKAEEEVELAMKEAGEQAAFDLGVHGIHPEILKLIGRLKYRTSYSQNVYQHSLEVAFLCGIMAAELGINVKQAKRAGLLHDLGKAVDHEVEGSHAVIGAELAKKYGESPKIVHAIMAHHEDEKPATVLAILVQAADALSGARPGARREMMETYVKRLDDLERIACSFSGVTNSFAIQAGREIRVMVSSEEISDERTLILAKDIAKKIETEMTYPGQIKINVIRETRATEYAR.

A helical membrane pass occupies residues Met-5 to Leu-25. The KH domain occupies Thr-211 to Leu-271. Residues Val-337–Ala-430 form the HD domain.

The protein belongs to the RNase Y family.

It localises to the cell membrane. Its function is as follows. Endoribonuclease that initiates mRNA decay. The sequence is that of Ribonuclease Y from Geotalea uraniireducens (strain Rf4) (Geobacter uraniireducens).